The sequence spans 527 residues: Peptide chain release factor 3 (527 aa).

Residues 9-278 form the tr-type G domain; it reads NKRRTFAIIS…GLTQWAPKPQ (270 aa). GTP contacts are provided by residues 18–25, 86–90, and 140–143; these read SHPDAGKT, DTPGH, and NKLD.

The protein belongs to the TRAFAC class translation factor GTPase superfamily. Classic translation factor GTPase family. PrfC subfamily.

It is found in the cytoplasm. Its function is as follows. Increases the formation of ribosomal termination complexes and stimulates activities of RF-1 and RF-2. It binds guanine nucleotides and has strong preference for UGA stop codons. It may interact directly with the ribosome. The stimulation of RF-1 and RF-2 is significantly reduced by GTP and GDP, but not by GMP. This is Peptide chain release factor 3 (prfC) from Haemophilus influenzae (strain ATCC 51907 / DSM 11121 / KW20 / Rd).